Reading from the N-terminus, the 336-residue chain is Inositol 2-dehydrogenase (336 aa).

The protein belongs to the Gfo/Idh/MocA family. In terms of assembly, homotetramer.

It carries out the reaction myo-inositol + NAD(+) = scyllo-inosose + NADH + H(+). Its function is as follows. Involved in the oxidation of myo-inositol (MI) to 2-keto-myo-inositol (2KMI or 2-inosose). The chain is Inositol 2-dehydrogenase from Agrobacterium fabrum (strain C58 / ATCC 33970) (Agrobacterium tumefaciens (strain C58)).